The following is a 678-amino-acid chain: NADPH--cytochrome P450 reductase (678 aa).

Glycine 2 carries the post-translational modification N-acetylglycine. Over 2–22 (GDSHEDTSATVPEAVAEEVSL) the chain is Lumenal. Residues 23–43 (FSTTDIVLFSLIVGVLTYWFI) traverse the membrane as a helical segment. Topologically, residues 44–678 (FKKKKEEIPE…KGRYSLDVWS (635 aa)) are cytoplasmic. The Flavodoxin-like domain maps to 80–224 (IIVFYGSQTG…DFITWREQFW (145 aa)). FMN contacts are provided by residues 86–91 (SQTGTA), 138–141 (ATYG), 173–182 (LGNKTYEHFN), and aspartate 208. The 243-residue stretch at 279-521 (KNPFLAAVTT…FVRKSQFRLP (243 aa)) folds into the FAD-binding FR-type domain. Arginine 298 provides a ligand contact to NADP(+). FAD-binding positions include arginine 424, 454–457 (RYYS), 472–474 (CAV), tyrosine 478, and 488–491 (GVAT). NADP(+)-binding positions include threonine 535, 596-597 (SR), 602-606 (KVYVQ), and aspartate 639. Tryptophan 677 is a binding site for FAD.

It belongs to the NADPH--cytochrome P450 reductase family. The protein in the N-terminal section; belongs to the flavodoxin family. This sequence in the C-terminal section; belongs to the flavoprotein pyridine nucleotide cytochrome reductase family. It depends on FAD as a cofactor. Requires FMN as cofactor.

It localises to the endoplasmic reticulum membrane. The catalysed reaction is 2 oxidized [cytochrome P450] + NADPH = 2 reduced [cytochrome P450] + NADP(+) + H(+). Functionally, this enzyme is required for electron transfer from NADP to cytochrome P450 in microsomes. It can also provide electron transfer to heme oxygenase and cytochrome B5. This chain is NADPH--cytochrome P450 reductase, found in Mus musculus (Mouse).